A 360-amino-acid chain; its full sequence is uncharacterized protein (360 aa).

The 232-residue stretch at Leu4–Ile235 folds into the ABC transporter domain. ATP is bound at residue Gly37–Ser44.

The protein belongs to the ABC transporter superfamily.

This is an uncharacterized protein from Escherichia coli O157:H7.